A 233-amino-acid polypeptide reads, in one-letter code: MTFAAAQATYVLHSRPYKETSALVDFFTAQGRLRAVLRGARGKAGALARPFVPLEAEWRGRGELKTVARLESAGIPNLLSGQALFSGLYLNELLIRLLPAEDPQPEIFAHYAATLPLLAAGRPLEPLLRAFEWRLLEQLGYGFALDVDIHGRPIEPQALYQLLPEAGLEPVTQLQPGLFQGVELLSMADADWSAPGALAAAKRLMRQALAPHLGGRPLVSRELFMNRKESPRD.

It belongs to the RecO family.

Its function is as follows. Involved in DNA repair and RecF pathway recombination. The sequence is that of DNA repair protein RecO from Pseudomonas paraeruginosa (strain DSM 24068 / PA7) (Pseudomonas aeruginosa (strain PA7)).